A 586-amino-acid chain; its full sequence is Alpha-1,2-mannosyltransferase MNN5 (586 aa).

Residues 1 to 29 (MLIRLKKRKILQVIVSAVVLILFFCSVHN) form the signal peptide. Asparagine 113, asparagine 136, asparagine 259, and asparagine 264 each carry an N-linked (GlcNAc...) asparagine glycan.

This sequence belongs to the MNN1/MNT family. Interacts with SVP26. Glycosylated.

It is found in the golgi apparatus. The protein localises to the cis-Golgi network. Its pathway is protein modification; protein glycosylation. Responsible for addition of first and second mannose residues to the outer chain of core N-linked polysaccharides and to O-linked mannotriose. Implicated in late Golgi modifications. The chain is Alpha-1,2-mannosyltransferase MNN5 (MNN5) from Saccharomyces cerevisiae (strain ATCC 204508 / S288c) (Baker's yeast).